We begin with the raw amino-acid sequence, 187 residues long: MNLSATLLLAFGMSMDAFAASIGKGATLHKPKFSEALRTGLIFGVIEAITPLVGWLLGLLATQFVLTWNHWIAFVLLVFLGGRMIIEGVRGCEEASEKIRRHSFWLLVTTAFATSLDAMAVGVGLAFLQVDIIKTALAIGCATLIMSTLGMMVGRFIGPLLGKRAEILGGVVLIGIGCQILWSHFAG.

6 helical membrane-spanning segments follow: residues 3-23 (LSAT…ASIG), 41-61 (LIFG…GLLA), 62-82 (TQFV…FLGG), 106-128 (LLVT…LAFL), 142-162 (ATLI…PLLG), and 167-187 (ILGG…HFAG).

It belongs to the MntP (TC 9.B.29) family.

The protein resides in the cell inner membrane. In terms of biological role, probably functions as a manganese efflux pump. In Cronobacter sakazakii (strain ATCC BAA-894) (Enterobacter sakazakii), this protein is Putative manganese efflux pump MntP.